Reading from the N-terminus, the 53-residue chain is ETSYTLNEVVPLKEFVPEWVRIGFSATTGAEFAAHEVLSWYFNSELSVTSSSN.

It belongs to the leguminous lectin family. Tetramer of two alpha and two beta chains.

The polypeptide is Mannose/glucose-specific lectin alpha 2 chain (Lathyrus ochrus (Cyprus-vetch)).